We begin with the raw amino-acid sequence, 323 residues long: Elongation factor P--(R)-beta-lysine ligase (323 aa).

76-78 is a binding site for substrate; that stretch reads SPE. Residues 100–102 and Asn-109 contribute to the ATP site; that span reads RNE. Tyr-118 provides a ligand contact to substrate. An ATP-binding site is contributed by 242 to 243; it reads EL. Glu-249 contributes to the substrate binding site. Gly-298 is an ATP binding site.

The protein belongs to the class-II aminoacyl-tRNA synthetase family. EpmA subfamily. In terms of assembly, homodimer.

The enzyme catalyses D-beta-lysine + L-lysyl-[protein] + ATP = N(6)-((3R)-3,6-diaminohexanoyl)-L-lysyl-[protein] + AMP + diphosphate + H(+). Its function is as follows. With EpmB is involved in the beta-lysylation step of the post-translational modification of translation elongation factor P (EF-P). Catalyzes the ATP-dependent activation of (R)-beta-lysine produced by EpmB, forming a lysyl-adenylate, from which the beta-lysyl moiety is then transferred to the epsilon-amino group of a conserved specific lysine residue in EF-P. The sequence is that of Elongation factor P--(R)-beta-lysine ligase from Histophilus somni (strain 129Pt) (Haemophilus somnus).